The chain runs to 358 residues: DNA polymerase IV (358 aa).

The UmuC domain maps to 4–185 (IIHIDMDCYF…LSLRKIPGVG (182 aa)). Residues D8 and D103 each contribute to the Mg(2+) site. Residue E104 is part of the active site.

Belongs to the DNA polymerase type-Y family. Monomer. It depends on Mg(2+) as a cofactor.

Its subcellular location is the cytoplasm. The enzyme catalyses DNA(n) + a 2'-deoxyribonucleoside 5'-triphosphate = DNA(n+1) + diphosphate. Its function is as follows. Poorly processive, error-prone DNA polymerase involved in untargeted mutagenesis. Copies undamaged DNA at stalled replication forks, which arise in vivo from mismatched or misaligned primer ends. These misaligned primers can be extended by PolIV. Exhibits no 3'-5' exonuclease (proofreading) activity. May be involved in translesional synthesis, in conjunction with the beta clamp from PolIII. This chain is DNA polymerase IV, found in Shewanella baltica (strain OS195).